Here is a 492-residue protein sequence, read N- to C-terminus: MKPVVALVGRPNVGKSTLFNRITRSRNALVDDFPGVTRDRHYVDAVWNERPFTLVDTGGFLLSDDDFFAREIRGHVELAIEDADIVALVLDGRAGISPFDRDLADILRRTSKPVFFLVNKVENHKQREELLEFYSLGIEKFYPMSAEHGIGVEPFLDDMVALFPAPEPVVEPQAGSEQGEPDASEQEICIAVAGRPNVGKSSLINRLFGKSRVVVSHVPGTTRDSVDLSIERNGRRFRLIDTAGIRRKGKVRERIEKYSILKSLKSLDQCDVALILIDADEGVTDQDITIAGYAQDRGCGALFLINKWDLLDEDRKDQRRFMEDLRTKSKFLSFAPAMTISALTGFRTHKILAMVEKIHAQYAYRINTGLLNRIVEDAIFRSEPPMHKGKRLKFFYATQVAVKPPTIVCFVNYPDAVHFSYHRYLVNQIREMAELEHTPIRLLFRAKTGKIDFSGKSKLAERIVEKKEKKTTRRKKERKEQSRRKRVRDLKG.

2 EngA-type G domains span residues 3–167 and 188–363; these read PVVA…PAPE and ICIA…AQYA. Residues 9-16, 56-60, 119-122, 194-201, 241-245, and 306-309 contribute to the GTP site; these read GRPNVGKS, DTGGF, NKVE, DTAGI, and NKWD. One can recognise a KH-like domain in the interval 364–448; that stretch reads YRINTGLLNR…PIRLLFRAKT (85 aa). Residues 464–492 form a disordered region; sequence VEKKEKKTTRRKKERKEQSRRKRVRDLKG. Residues 469–492 are compositionally biased toward basic residues; it reads KKTTRRKKERKEQSRRKRVRDLKG.

Belongs to the TRAFAC class TrmE-Era-EngA-EngB-Septin-like GTPase superfamily. EngA (Der) GTPase family. Associates with the 50S ribosomal subunit.

GTPase that plays an essential role in the late steps of ribosome biogenesis. This Desulforapulum autotrophicum (strain ATCC 43914 / DSM 3382 / VKM B-1955 / HRM2) (Desulfobacterium autotrophicum) protein is GTPase Der.